A 204-amino-acid polypeptide reads, in one-letter code: Holliday junction branch migration complex subunit RuvA (204 aa).

Residues 1–64 (MIGRLQGILL…EDAHLLFGFS (64 aa)) form a domain I region. The interval 65–143 (AKTDRTLFRE…GIKQPDFFVE (79 aa)) is domain II. The interval 144–155 (SSHVGAVDPVTT) is flexible linker. A domain III region spans residues 156 to 204 (SPEVPAEEAVAALMALGYKASDAEKMVKRIAKPHLTSEQLIREALKAAL).

Belongs to the RuvA family. In terms of assembly, homotetramer. Forms an RuvA(8)-RuvB(12)-Holliday junction (HJ) complex. HJ DNA is sandwiched between 2 RuvA tetramers; dsDNA enters through RuvA and exits via RuvB. An RuvB hexamer assembles on each DNA strand where it exits the tetramer. Each RuvB hexamer is contacted by two RuvA subunits (via domain III) on 2 adjacent RuvB subunits; this complex drives branch migration. In the full resolvosome a probable DNA-RuvA(4)-RuvB(12)-RuvC(2) complex forms which resolves the HJ.

It is found in the cytoplasm. Functionally, the RuvA-RuvB-RuvC complex processes Holliday junction (HJ) DNA during genetic recombination and DNA repair, while the RuvA-RuvB complex plays an important role in the rescue of blocked DNA replication forks via replication fork reversal (RFR). RuvA specifically binds to HJ cruciform DNA, conferring on it an open structure. The RuvB hexamer acts as an ATP-dependent pump, pulling dsDNA into and through the RuvAB complex. HJ branch migration allows RuvC to scan DNA until it finds its consensus sequence, where it cleaves and resolves the cruciform DNA. The sequence is that of Holliday junction branch migration complex subunit RuvA from Mannheimia succiniciproducens (strain KCTC 0769BP / MBEL55E).